The chain runs to 787 residues: Integrin beta-6 (787 aa).

Residues 1 to 21 (MGIELVCLFLLLLGRNDHVQG) form the signal peptide. Residues 22–71 (GCAWGGAESCSDCLLTGPHCAWCSQENFTHLSGAGERCDTPANLLAKGCQ) enclose the PSI domain. Over 22 to 708 (GCAWGGAESC…KDCPKPPNIP (687 aa)) the chain is Extracellular. 19 disulfide bridges follow: C23-C41, C31-C454, C34-C59, C44-C70, C197-C204, C252-C293, C394-C406, C426-C452, C456-C476, C467-C479, C481-C490, C492-C519, C502-C517, C511-C522, C524-C537, C539-C560, C544-C558, C552-C563, and C565-C574. 2 N-linked (GlcNAc...) asparagine glycosylation sites follow: N48 and N97. In terms of domain architecture, VWFA spans 131–371 (YPVDLYYLMD…QLIISAYEEL (241 aa)). D140, S142, and S144 together coordinate Mg(2+). Ca(2+) is bound by residues S144, D147, D148, and E179. The Ca(2+) site is built by N235, D237, P239, and E240. Mg(2+) is bound at residue E240. The N-linked (GlcNAc...) asparagine glycan is linked to N260. Residues D271 and K355 each coordinate Ca(2+). The N-linked (GlcNAc...) asparagine glycan is linked to N387. N-linked (GlcNAc...) asparagine glycosylation occurs at N418. 4 I-EGF domains span residues 456-491 (CQREIETNSSKCHNGNGSFQCGVCTCNPGHMGPHCE), 492-538 (CGED…PYCQ), 539-575 (CDNFSCLRHKGLLCGDNGDCDCGECVCRDGWTGEYCN), and 576-615 (CTTNRDSCTSEDGVLCSGRGDCVCGKCVCRNPGASGPTCE). 2 N-linked (GlcNAc...) asparagine glycosylation sites follow: N463 and N471. A glycan (N-linked (GlcNAc...) asparagine) is linked at N541. N575 carries N-linked (GlcNAc...) asparagine glycosylation. Intrachain disulfides connect C576-C599, C583-C597, C591-C602, C604-C614, C617-C620, C624-C669, C630-C649, C633-C645, and C677-C701. Residues 709 to 729 (MIMLGVSLAILLIGVVLLCIW) traverse the membrane as a helical segment. Positions 730-757 (KLLVSFHDRKEVAKFEAERSKAKWQTGT) are interaction with HAX1. Residues 730-787 (KLLVSFHDRKEVAKFEAERSKAKWQTGTNPLYRGSTSTFKNVTYKHREKHKAGLSSDG) lie on the Cytoplasmic side of the membrane.

Belongs to the integrin beta chain family. Heterodimer of an alpha and a beta subunit. Interacts with FLNB. Interacts with HAX1. ITGAV:ITGB6 interacts with FBN1. ITGAV:ITGB6 interacts with TGFB1.

The protein localises to the cell membrane. It localises to the cell junction. The protein resides in the focal adhesion. Functionally, integrin alpha-V:beta-6 (ITGAV:ITGB6) is a receptor for fibronectin and cytotactin. It recognizes the sequence R-G-D in its ligands. ITGAV:ITGB6 acts as a receptor for fibrillin-1 (FBN1) and mediates R-G-D-dependent cell adhesion to FBN1. Integrin alpha-V:beta-6 (ITGAV:ITGB6) mediates R-G-D-dependent release of transforming growth factor beta-1 (TGF-beta-1) from regulatory Latency-associated peptide (LAP), thereby playing a key role in TGF-beta-1 activation. In Mus musculus (Mouse), this protein is Integrin beta-6 (Itgb6).